Consider the following 419-residue polypeptide: UDP-N-acetylglucosamine 1-carboxyvinyltransferase (419 aa).

Phosphoenolpyruvate is bound at residue 22-23 (KN). Arg91 contributes to the UDP-N-acetyl-alpha-D-glucosamine binding site. Cys115 acts as the Proton donor in catalysis. Cys115 carries the 2-(S-cysteinyl)pyruvic acid O-phosphothioketal modification. Residues 120 to 124 (RPVDL), 160 to 163 (KVSV), Asp305, and Ile327 each bind UDP-N-acetyl-alpha-D-glucosamine.

It belongs to the EPSP synthase family. MurA subfamily.

Its subcellular location is the cytoplasm. It catalyses the reaction phosphoenolpyruvate + UDP-N-acetyl-alpha-D-glucosamine = UDP-N-acetyl-3-O-(1-carboxyvinyl)-alpha-D-glucosamine + phosphate. The protein operates within cell wall biogenesis; peptidoglycan biosynthesis. Cell wall formation. Adds enolpyruvyl to UDP-N-acetylglucosamine. The protein is UDP-N-acetylglucosamine 1-carboxyvinyltransferase of Citrobacter koseri (strain ATCC BAA-895 / CDC 4225-83 / SGSC4696).